We begin with the raw amino-acid sequence, 111 residues long: UPF0145 protein BRADO6695 (111 aa).

Belongs to the UPF0145 family.

The sequence is that of UPF0145 protein BRADO6695 from Bradyrhizobium sp. (strain ORS 278).